We begin with the raw amino-acid sequence, 529 residues long: Bifunctional purine biosynthesis protein PurH (529 aa).

The MGS-like domain occupies 1 to 148 (MQQRRPIRRA…KNHKDVAIVV (148 aa)). K287 is modified (N6-acetyllysine).

It belongs to the PurH family.

The catalysed reaction is (6R)-10-formyltetrahydrofolate + 5-amino-1-(5-phospho-beta-D-ribosyl)imidazole-4-carboxamide = 5-formamido-1-(5-phospho-D-ribosyl)imidazole-4-carboxamide + (6S)-5,6,7,8-tetrahydrofolate. The enzyme catalyses IMP + H2O = 5-formamido-1-(5-phospho-D-ribosyl)imidazole-4-carboxamide. Its pathway is purine metabolism; IMP biosynthesis via de novo pathway; 5-formamido-1-(5-phospho-D-ribosyl)imidazole-4-carboxamide from 5-amino-1-(5-phospho-D-ribosyl)imidazole-4-carboxamide (10-formyl THF route): step 1/1. It functions in the pathway purine metabolism; IMP biosynthesis via de novo pathway; IMP from 5-formamido-1-(5-phospho-D-ribosyl)imidazole-4-carboxamide: step 1/1. The chain is Bifunctional purine biosynthesis protein PurH from Escherichia coli O139:H28 (strain E24377A / ETEC).